Consider the following 318-residue polypeptide: Melanocyte-stimulating hormone receptor (318 aa).

Over 1–37 the chain is Extracellular; the sequence is MPMQGAQRKLLGSLNSTPTATSNLGLAANRTGAPCLE. N-linked (GlcNAc...) asparagine glycosylation is present at Asn29. The chain crosses the membrane as a helical span at residues 38 to 63; it reads LPIPNGLFLSLGLVSLVENVLVVAAI. Residues 64–72 are Cytoplasmic-facing; the sequence is AKNRNLHSS. Residues 73 to 93 form a helical membrane-spanning segment; it reads MYCFICCLALSDLLVSGSNML. At 94–118 the chain is on the extracellular side; sequence ETAVILLLEAGVLATRASVVQQLHN. A helical transmembrane segment spans residues 119 to 140; it reads TIDVLTCSSMLCSLCFLGAIAV. The Cytoplasmic portion of the chain corresponds to 141-163; the sequence is DRYISIFYALRYHSIMTLPRAQR. The helical transmembrane segment at 164-183 threads the bilayer; sequence AVAAIWVASVLSSTLFITYY. The Extracellular portion of the chain corresponds to 184–191; it reads DHAAVLLC. The chain crosses the membrane as a helical span at residues 192-211; the sequence is LMVFFLAMLVLMAVLYVHML. Topologically, residues 212-240 are cytoplasmic; that stretch reads ARARQHAQGIIRLHKRQPPAHKGFGLRGA. A helical membrane pass occupies residues 241–266; that stretch reads ATLTILLGIFFLCWGPFFLCLTLVVF. Topologically, residues 267 to 279 are extracellular; that stretch reads CPQHLTCNCIFKN. The helical transmembrane segment at 280–300 threads the bilayer; that stretch reads FKVFLTLIICNTIIDPLIYAF. Residues 301 to 317 are Cytoplasmic-facing; it reads RSQELRRMLKEVLGRGR.

It belongs to the G-protein coupled receptor 1 family. As to quaternary structure, interacts with MGRN1, but does not undergo MGRN1-mediated ubiquitination; this interaction competes with GNAS-binding and thus inhibits agonist-induced cAMP production. Interacts with OPN3; the interaction results in a decrease in MC1R-mediated cAMP signaling and ultimately a decrease in melanin production in melanocytes.

It is found in the cell membrane. In terms of biological role, receptor for MSH (alpha, beta and gamma) and ACTH. The activity of this receptor is mediated by G proteins which activate adenylate cyclase. Mediates melanogenesis, the production of eumelanin (black/brown) and phaeomelanin (red/yellow), via regulation of cAMP signaling in melanocytes. The polypeptide is Melanocyte-stimulating hormone receptor (MC1R) (Leontopithecus rosalia (Golden lion tamarin)).